The chain runs to 1320 residues: Bifunctional protein PutA (1320 aa).

Residues 228–574 (LSRSLNRIIG…SFVNRIADTS (347 aa)) form a proline dehydrogenase region. The interval 653 to 1119 (QPVAAGEMSP…LANRPESALA (467 aa)) is aldehyde dehydrogenase. Residues glutamate 883 and cysteine 917 contribute to the active site.

This sequence in the N-terminal section; belongs to the proline dehydrogenase family. It in the C-terminal section; belongs to the aldehyde dehydrogenase family. Homodimer. It depends on FAD as a cofactor.

It carries out the reaction L-proline + a quinone = (S)-1-pyrroline-5-carboxylate + a quinol + H(+). It catalyses the reaction L-glutamate 5-semialdehyde + NAD(+) + H2O = L-glutamate + NADH + 2 H(+). The protein operates within amino-acid degradation; L-proline degradation into L-glutamate; L-glutamate from L-proline: step 1/2. It functions in the pathway amino-acid degradation; L-proline degradation into L-glutamate; L-glutamate from L-proline: step 2/2. Its function is as follows. Oxidizes proline to glutamate for use as a carbon and nitrogen source and also function as a transcriptional repressor of the put operon. The chain is Bifunctional protein PutA (putA) from Escherichia coli (strain K12).